The sequence spans 982 residues: Collagen alpha-1(I) chain (982 aa).

Residues 1-982 (GPMGPSGPRG…PGAPGPPGPP (982 aa)) form a disordered region. A compositionally biased stretch (low complexity) spans 8–27 (PRGFQGPPGEPGEPGASGPM). The segment covering 39–53 (NGDDGEAGKPGRPGE) has biased composition (basic and acidic residues). A Phosphoserine modification is found at serine 81. Composition is skewed to low complexity over residues 89 to 105 (DAGPAGPKGEPGSPGEN) and 128 to 141 (PAGARGNDGATGAA). Over residues 143–155 (PPGPTGPAGPPGF) the composition is skewed to pro residues. Low complexity predominate over residues 189–228 (AGAAGPAGNPGADGQPGAKGANGAPGIAGAPGFPGARGPS). The segment covering 294–303 (GERGGPGSRG) has biased composition (gly residues). 9 stretches are compositionally biased toward low complexity: residues 304 to 335 (FPGADGVAGPKGPAGERGAPGPAGPKGSPGEA), 347 to 373 (KGITGSPGSPGPDGKTGPPGPAGQDGR), 382 to 401 (ARGQAGVMGFPGPKGAAGEP), 425 to 437 (AGAQGPPGSAGPA), 513 to 526 (APGAPGSQGAPGIQ), 583 to 597 (SGPSGPAGPTGARGA), 610 to 640 (AGFAGPPGADGQPGAKGEPGDAGAKGDAGPA), 666 to 682 (SAGPPGATGFPGAAGRV), and 727 to 751 (AGEKGSPGSDGPAGAPGTPGPQGIA). Serine 586 carries the post-translational modification Phosphoserine. Pro residues-rich tracts occupy residues 792 to 802 (PPGPIGPPGIA) and 838 to 853 (AGPPGAPGAPGAPGPV). Positions 874–888 (IGPTGARGPAGPQGP) are enriched in low complexity. Over residues 889 to 900 (RGDKGETGEQGD) the composition is skewed to basic and acidic residues. The segment covering 916 to 940 (PGEQGPAGASGPAGPRGPPGSAGAP) has biased composition (low complexity). Pro residues predominate over residues 966-982 (PRGPPGPPGAPGPPGPP).

The protein belongs to the fibrillar collagen family. In terms of assembly, trimers of one alpha 2(I) and two alpha 1(I) chains. In terms of processing, prolines at the third position of the tripeptide repeating unit (G-X-Y) are hydroxylated in some or all of the chains. In terms of tissue distribution, forms the fibrils of tendon, ligaments and bones. In bones, the fibrils are mineralized with calcium hydroxyapatite.

It is found in the secreted. The protein resides in the extracellular space. Its subcellular location is the extracellular matrix. Functionally, type I collagen is a member of group I collagen (fibrillar forming collagen). The sequence is that of Collagen alpha-1(I) chain from Toxodon sp.